Reading from the N-terminus, the 496-residue chain is Probable cytosol aminopeptidase (496 aa).

Positions 257 and 262 each coordinate Mn(2+). Residue K269 is part of the active site. The Mn(2+) site is built by D281, D341, and E343. The active site involves R345.

It belongs to the peptidase M17 family. It depends on Mn(2+) as a cofactor.

The protein localises to the cytoplasm. It carries out the reaction Release of an N-terminal amino acid, Xaa-|-Yaa-, in which Xaa is preferably Leu, but may be other amino acids including Pro although not Arg or Lys, and Yaa may be Pro. Amino acid amides and methyl esters are also readily hydrolyzed, but rates on arylamides are exceedingly low.. It catalyses the reaction Release of an N-terminal amino acid, preferentially leucine, but not glutamic or aspartic acids.. Functionally, presumably involved in the processing and regular turnover of intracellular proteins. Catalyzes the removal of unsubstituted N-terminal amino acids from various peptides. The sequence is that of Probable cytosol aminopeptidase from Prochlorococcus marinus (strain SARG / CCMP1375 / SS120).